Reading from the N-terminus, the 1407-residue chain is Clustered mitochondria protein (1407 aa).

Over residues methionine 1–arginine 12 the composition is skewed to basic residues. Disordered regions lie at residues methionine 1–alanine 36 and isoleucine 83–glycine 103. Residues alanine 14 to aspartate 24 show a composition bias toward polar residues. The 287-residue stretch at proline 384–threonine 670 folds into the Clu domain. The tract at residues isoleucine 724–serine 760 is disordered. Polar residues predominate over residues glycine 730–alanine 747. TPR repeat units follow at residues alanine 1025–valine 1058, alanine 1067–cysteine 1100, alanine 1109–serine 1142, alanine 1151–leucine 1184, and alanine 1193–glutamine 1226. Residues valine 1358–lysine 1407 are disordered. Residues lysine 1362–lysine 1382 are compositionally biased toward basic and acidic residues.

This sequence belongs to the CLU family.

It localises to the cytoplasm. Its function is as follows. mRNA-binding protein involved in proper cytoplasmic distribution of mitochondria. Together with REC2, REC3 and FMT/CLU, contributes to the establishment of the cellular volume devoted to the chloroplast compartment. This chain is Clustered mitochondria protein, found in Arabidopsis thaliana (Mouse-ear cress).